Here is a 192-residue protein sequence, read N- to C-terminus: Cytidylate kinase (192 aa).

7 to 15 (GPAGSGKST) contacts ATP.

Belongs to the cytidylate kinase family. Type 2 subfamily.

The protein localises to the cytoplasm. It catalyses the reaction CMP + ATP = CDP + ADP. The enzyme catalyses dCMP + ATP = dCDP + ADP. The chain is Cytidylate kinase from Natronomonas pharaonis (strain ATCC 35678 / DSM 2160 / CIP 103997 / JCM 8858 / NBRC 14720 / NCIMB 2260 / Gabara) (Halobacterium pharaonis).